Consider the following 559-residue polypeptide: 2,3-bisphosphoglycerate-independent phosphoglycerate mutase (559 aa).

Mn(2+) contacts are provided by D28 and S81. S81 (phosphoserine intermediate) is an active-site residue. Substrate-binding positions include H140, 170-171, R206, R213, 286-289, and K361; these read RD and RADR. Mn(2+)-binding residues include D430, H434, D471, H472, and H501.

Belongs to the BPG-independent phosphoglycerate mutase family. Monomer. Mn(2+) serves as cofactor. In terms of processing, the N-terminus is blocked. Found ubiquitously in germinating seed.

The protein localises to the cytoplasm. It catalyses the reaction (2R)-2-phosphoglycerate = (2R)-3-phosphoglycerate. It functions in the pathway carbohydrate degradation; glycolysis; pyruvate from D-glyceraldehyde 3-phosphate: step 3/5. Functionally, catalyzes the interconversion of 2-phosphoglycerate and 3-phosphoglycerate. This Zea mays (Maize) protein is 2,3-bisphosphoglycerate-independent phosphoglycerate mutase.